The chain runs to 153 residues: Transcriptional repressor NrdR (153 aa).

Positions 1-22 (MRCPACHHNGTRVLDSRPAHEG) are disordered. A zinc finger spans residues 3–34 (CPACHHNGTRVLDSRPAHEGRSIRRRRECESC). An ATP-cone domain is found at 49–139 (LIVVKKDGTR…VYRQFKDINV (91 aa)).

It belongs to the NrdR family. Zn(2+) is required as a cofactor.

In terms of biological role, negatively regulates transcription of bacterial ribonucleotide reductase nrd genes and operons by binding to NrdR-boxes. The polypeptide is Transcriptional repressor NrdR (Halalkalibacterium halodurans (strain ATCC BAA-125 / DSM 18197 / FERM 7344 / JCM 9153 / C-125) (Bacillus halodurans)).